Consider the following 153-residue polypeptide: Deoxyuridine 5'-triphosphate nucleotidohydrolase (153 aa).

Substrate is bound by residues 71–73, Asn84, 88–90, and Lys98; these read RSG and TID.

Belongs to the dUTPase family. The cofactor is Mg(2+).

It catalyses the reaction dUTP + H2O = dUMP + diphosphate + H(+). It participates in pyrimidine metabolism; dUMP biosynthesis; dUMP from dCTP (dUTP route): step 2/2. Its function is as follows. This enzyme is involved in nucleotide metabolism: it produces dUMP, the immediate precursor of thymidine nucleotides and it decreases the intracellular concentration of dUTP so that uracil cannot be incorporated into DNA. This chain is Deoxyuridine 5'-triphosphate nucleotidohydrolase, found in Wolbachia pipientis wMel.